We begin with the raw amino-acid sequence, 493 residues long: Probable cytosol aminopeptidase (493 aa).

Mn(2+)-binding residues include lysine 260 and aspartate 265. Lysine 272 is a catalytic residue. Mn(2+) contacts are provided by aspartate 284, aspartate 343, and glutamate 345. Residue arginine 347 is part of the active site.

The protein belongs to the peptidase M17 family. The cofactor is Mn(2+).

It localises to the cytoplasm. It carries out the reaction Release of an N-terminal amino acid, Xaa-|-Yaa-, in which Xaa is preferably Leu, but may be other amino acids including Pro although not Arg or Lys, and Yaa may be Pro. Amino acid amides and methyl esters are also readily hydrolyzed, but rates on arylamides are exceedingly low.. The catalysed reaction is Release of an N-terminal amino acid, preferentially leucine, but not glutamic or aspartic acids.. In terms of biological role, presumably involved in the processing and regular turnover of intracellular proteins. Catalyzes the removal of unsubstituted N-terminal amino acids from various peptides. The chain is Probable cytosol aminopeptidase from Nostoc punctiforme (strain ATCC 29133 / PCC 73102).